Consider the following 377-residue polypeptide: Histidine protein methyltransferase 1 (377 aa).

The protein belongs to the methyltransferase superfamily. METTL18 family.

Its subcellular location is the cytoplasm. The protein resides in the nucleus. The catalysed reaction is L-histidyl-[protein] + S-adenosyl-L-methionine = N(tele)-methyl-L-histidyl-[protein] + S-adenosyl-L-homocysteine + H(+). Functionally, protein-histidine N-methyltransferase that mediates methylation of RPL3 at 'His-243'. Methylates ribosome-associated RPL3, but not free RPL3, thereby regulating 60S subunit assembly. In addition to RPL3, mediates His methylation of other proteins. This is Histidine protein methyltransferase 1 from Saccharomyces cerevisiae (strain ATCC 204508 / S288c) (Baker's yeast).